Consider the following 250-residue polypeptide: uncharacterized protein (250 aa).

To class-3 of adenylyl cyclases.

This is an uncharacterized protein from Mycobacterium tuberculosis (strain ATCC 25618 / H37Rv).